The following is a 502-amino-acid chain: ATP synthase subunit alpha (502 aa).

169-176 is a binding site for ATP; sequence GDRQTGKT.

Belongs to the ATPase alpha/beta chains family. F-type ATPases have 2 components, CF(1) - the catalytic core - and CF(0) - the membrane proton channel. CF(1) has five subunits: alpha(3), beta(3), gamma(1), delta(1), epsilon(1). CF(0) has three main subunits: a(1), b(2) and c(9-12). The alpha and beta chains form an alternating ring which encloses part of the gamma chain. CF(1) is attached to CF(0) by a central stalk formed by the gamma and epsilon chains, while a peripheral stalk is formed by the delta and b chains.

The protein resides in the cell inner membrane. The catalysed reaction is ATP + H2O + 4 H(+)(in) = ADP + phosphate + 5 H(+)(out). Produces ATP from ADP in the presence of a proton gradient across the membrane. The alpha chain is a regulatory subunit. This chain is ATP synthase subunit alpha, found in Trichlorobacter lovleyi (strain ATCC BAA-1151 / DSM 17278 / SZ) (Geobacter lovleyi).